Here is a 674-residue protein sequence, read N- to C-terminus: Acetyl-coenzyme A synthetase (674 aa).

CoA contacts are provided by residues 201 to 204 (RGGR) and Thr-320. Residues 396-398 (GEP), 420-425 (DTYWQT), Asp-518, and Arg-533 contribute to the ATP site. Ser-541 serves as a coordination point for CoA. Arg-544 is an ATP binding site. Arg-603 lines the CoA pocket.

Belongs to the ATP-dependent AMP-binding enzyme family.

The enzyme catalyses acetate + ATP + CoA = acetyl-CoA + AMP + diphosphate. The polypeptide is Acetyl-coenzyme A synthetase (acsA) (Dictyostelium discoideum (Social amoeba)).